A 37-amino-acid chain; its full sequence is Cytochrome b6-f complex subunit 5 (37 aa).

The helical transmembrane segment at L5–A25 threads the bilayer.

Belongs to the PetG family. The 4 large subunits of the cytochrome b6-f complex are cytochrome b6, subunit IV (17 kDa polypeptide, PetD), cytochrome f and the Rieske protein, while the 4 small subunits are PetG, PetL, PetM and PetN. The complex functions as a dimer.

Its subcellular location is the plastid. It is found in the chloroplast thylakoid membrane. Functionally, component of the cytochrome b6-f complex, which mediates electron transfer between photosystem II (PSII) and photosystem I (PSI), cyclic electron flow around PSI, and state transitions. PetG is required for either the stability or assembly of the cytochrome b6-f complex. In Psilotum nudum (Whisk fern), this protein is Cytochrome b6-f complex subunit 5.